The sequence spans 492 residues: Glutamyl-tRNA(Gln) amidotransferase subunit A (492 aa).

Residues lysine 78 and serine 158 each act as charge relay system in the active site. Catalysis depends on serine 182, which acts as the Acyl-ester intermediate.

This sequence belongs to the amidase family. GatA subfamily. As to quaternary structure, heterotrimer of A, B and C subunits.

The catalysed reaction is L-glutamyl-tRNA(Gln) + L-glutamine + ATP + H2O = L-glutaminyl-tRNA(Gln) + L-glutamate + ADP + phosphate + H(+). Functionally, allows the formation of correctly charged Gln-tRNA(Gln) through the transamidation of misacylated Glu-tRNA(Gln) in organisms which lack glutaminyl-tRNA synthetase. The reaction takes place in the presence of glutamine and ATP through an activated gamma-phospho-Glu-tRNA(Gln). This chain is Glutamyl-tRNA(Gln) amidotransferase subunit A, found in Orientia tsutsugamushi (strain Boryong) (Rickettsia tsutsugamushi).